Reading from the N-terminus, the 235-residue chain is Ribonuclease HII (235 aa).

Residues 23–212 (GLVAGVDEAG…VAHVVSIARM (190 aa)) form the RNase H type-2 domain. The a divalent metal cation site is built by Asp29, Glu30, and Asp121.

This sequence belongs to the RNase HII family. Mn(2+) is required as a cofactor. Requires Mg(2+) as cofactor.

The protein resides in the cytoplasm. The catalysed reaction is Endonucleolytic cleavage to 5'-phosphomonoester.. Endonuclease that specifically degrades the RNA of RNA-DNA hybrids. In Delftia acidovorans (strain DSM 14801 / SPH-1), this protein is Ribonuclease HII.